We begin with the raw amino-acid sequence, 382 residues long: Mannitol-1-phosphate 5-dehydrogenase (382 aa).

3 to 14 (ALHFGAGNIGRG) is a binding site for NAD(+).

This sequence belongs to the mannitol dehydrogenase family.

It catalyses the reaction D-mannitol 1-phosphate + NAD(+) = beta-D-fructose 6-phosphate + NADH + H(+). The protein is Mannitol-1-phosphate 5-dehydrogenase of Salmonella enteritidis PT4 (strain P125109).